The sequence spans 309 residues: Genome polyprotein (309 aa).

Topologically, residues 1 to 40 are cytoplasmic; sequence GFADLMGYIPLVGAPLGGAARALAHGVRVLEDGVNYATGN. An important for lipid droplets localization region spans residues 36–39; the sequence is YATG. A helical transmembrane segment spans residues 41-61; sequence LPGCSFSIFLLALLSCLTVPA. Positions 50-63 are cleaved as a propeptide — ER anchor for the core protein, removed in mature form by host signal peptidase; sequence LLALLSCLTVPASA. Over 62–230 the chain is Lumenal; that stretch reads SAYQVRNSSG…AGAHWGVLAG (169 aa). 3 N-linked (GlcNAc...) asparagine; by host glycosylation sites follow: Asn-68, Asn-81, and Asn-106. Residues 137-168 form an important for fusion region; that stretch reads LVGSATLCSALYVGDLCGSVFLVGQLFTFSPR. Asn-177 carries an N-linked (GlcNAc...) asparagine; by host glycan. Residues 231–251 traverse the membrane as a helical segment; that stretch reads IAYFSMVGNWAKVLVVLLLFA. Topologically, residues 252 to 309 are lumenal; that stretch reads GVDATTYTTGGNAARTTQALTSFFSPGAKQDIQLINTNGSWHINRTALNCNASLDTGW. The HVR1 stretch occupies residues 256-282; it reads TTYTTGGNAARTTQALTSFFSPGAKQD. N-linked (GlcNAc...) (high mannose) asparagine; by host glycosylation is found at Asn-289, Asn-295, and Asn-302.

It belongs to the hepacivirus polyprotein family. As to quaternary structure, homooligomer. Interacts with E1 (via C-terminus). Interacts with the non-structural protein 5A. Interacts (via N-terminus) with host STAT1 (via SH2 domain); this interaction results in decreased STAT1 phosphorylation and ubiquitin-mediated proteasome-dependent STAT1 degradation, leading to decreased IFN-stimulated gene transcription. Interacts with host STAT3; this interaction constitutively activates STAT3. Interacts with host LTBR receptor. Interacts with host TNFRSF1A receptor and possibly induces apoptosis. Interacts with host HNRPK. Interacts with host YWHAE. Interacts with host UBE3A/E6AP. Interacts with host DDX3X. Interacts with host APOA2. Interacts with host RXRA protein. Interacts with host SP110 isoform 3/Sp110b; this interaction sequesters the transcriptional corepressor SP110 away from the nucleus. Interacts with host CREB3 nuclear transcription protein; this interaction triggers cell transformation. Interacts with host ACY3. Interacts with host C1QR1. Interacts with host RBM24; this interaction, which enhances the interaction of the mature core protein with 5'-UTR, may inhibit viral translation and favor replication. Interacts with host EIF2AK2/PKR; this interaction induces the autophosphorylation of EIF2AK2. Part of the viral assembly initiation complex composed of NS2, E1, E2, NS3, NS4A, NS5A and the mature core protein. In terms of assembly, forms a heterodimer with envelope glycoprotein E2. Interacts with mature core protein. Interacts with protease NS2. The heterodimer E1/E2 interacts with host CLDN1; this interaction plays a role in viral entry into host cell. Interacts with host SPSB2 (via C-terminus). Part of the viral assembly initiation complex composed of NS2, E1, E2, NS3, NS4A, NS5A and the mature core protein. Forms a heterodimer with envelope glycoprotein E1. Interacts with host CD81 and SCARB1 receptors; these interactions play a role in viral entry into host cell. Interacts with host EIF2AK2/PKR; this interaction inhibits EIF2AK2 and probably allows the virus to evade the innate immune response. Interacts with host CD209/DC-SIGN and CLEC4M/DC-SIGNR. Interact with host SPCS1; this interaction is essential for viral particle assembly. Interacts with protease NS2. The heterodimer E1/E2 interacts with host CLDN1; this interaction plays a role in viral entry into host cell. Part of the viral assembly initiation complex composed of NS2, E1, E2, NS3, NS4A, NS5A and the mature core protein. Post-translationally, specific enzymatic cleavages in vivo yield mature proteins. The structural proteins, core, E1, E2 and p7 are produced by proteolytic processing by host signal peptidases. The core protein precursor is synthesized as a 23 kDa, which is retained in the ER membrane through the hydrophobic signal peptide. Cleavage by the signal peptidase releases the 21 kDa mature core protein. The cleavage of the core protein precursor occurs between aminoacids 176 and 188 but the exact cleavage site is not known. Some degraded forms of the core protein appear as well during the course of infection. The other proteins (p7, NS2, NS3, NS4A, NS4B, NS5A and NS5B) are cleaved by the viral proteases. Autoprocessing between NS2 and NS3 is mediated by the NS2 cysteine protease catalytic domain and regulated by the NS3 N-terminal domain. Phosphorylated by host PKC and PKA. In terms of processing, ubiquitinated; mediated by UBE3A and leading to core protein subsequent proteasomal degradation. Post-translationally, highly N-glycosylated.

It is found in the host endoplasmic reticulum membrane. The protein localises to the host mitochondrion membrane. The protein resides in the virion. Its subcellular location is the host cytoplasm. It localises to the host nucleus. It is found in the host lipid droplet. The protein localises to the virion membrane. Packages viral RNA to form a viral nucleocapsid, and promotes virion budding. Participates in the viral particle production as a result of its interaction with the non-structural protein 5A. Binds RNA and may function as a RNA chaperone to induce the RNA structural rearrangements taking place during virus replication. Modulates viral translation initiation by interacting with viral IRES and 40S ribosomal subunit. Affects various cell signaling pathways, host immunity and lipid metabolism. Prevents the establishment of cellular antiviral state by blocking the interferon-alpha/beta (IFN-alpha/beta) and IFN-gamma signaling pathways and by blocking the formation of phosphorylated STAT1 and promoting ubiquitin-mediated proteasome-dependent degradation of STAT1. Activates STAT3 leading to cellular transformation. Regulates the activity of cellular genes, including c-myc and c-fos. May repress the promoter of p53, and sequester CREB3 and SP110 isoform 3/Sp110b in the cytoplasm. Represses cell cycle negative regulating factor CDKN1A, thereby interrupting an important check point of normal cell cycle regulation. Targets transcription factors involved in the regulation of inflammatory responses and in the immune response: suppresses TNF-induced NF-kappa-B activation, and activates AP-1. Binds to dendritic cells (DCs) via C1QR1, resulting in down-regulation of T-lymphocytes proliferation. Alters lipid metabolism by interacting with hepatocellular proteins involved in lipid accumulation and storage. Induces up-regulation of FAS promoter activity, and thereby contributes to the increased triglyceride accumulation in hepatocytes (steatosis). Functionally, forms a heterodimer with envelope glycoprotein E2, which mediates virus attachment to the host cell, virion internalization through clathrin-dependent endocytosis and fusion with host membrane. Fusion with the host cell is most likely mediated by both E1 and E2, through conformational rearrangements of the heterodimer required for fusion rather than a classical class II fusion mechanism. E1/E2 heterodimer binds host apolipoproteins such as APOB and ApoE thereby forming a lipo-viro-particle (LVP). APOE associated to the LVP allows the initial virus attachment to cell surface receptors such as the heparan sulfate proteoglycans (HSPGs), syndecan-1 (SDC1), syndecan-1 (SDC2), the low-density lipoprotein receptor (LDLR) and scavenger receptor class B type I (SCARB1). The cholesterol transfer activity of SCARB1 allows E2 exposure and binding of E2 to SCARB1 and the tetraspanin CD81. E1/E2 heterodimer binding on CD81 activates the epithelial growth factor receptor (EGFR) signaling pathway. Diffusion of the complex E1-E2-EGFR-SCARB1-CD81 to the cell lateral membrane allows further interaction with Claudin 1 (CLDN1) and occludin (OCLN) to finally trigger HCV entry. In terms of biological role, forms a heterodimer with envelope glycoprotein E1, which mediates virus attachment to the host cell, virion internalization through clathrin-dependent endocytosis and fusion with host membrane. Fusion with the host cell is most likely mediated by both E1 and E2, through conformational rearrangements of the heterodimer required for fusion rather than a classical class II fusion mechanism. The interaction between envelope glycoprotein E2 and host apolipoprotein E/APOE allows the proper assembly, maturation and infectivity of the viral particles. This interaction is probably promoted via the up-regulation of cellular autophagy by the virus. E1/E2 heterodimer binds host apolipoproteins such as APOB and APOE thereby forming a lipo-viro-particle (LVP). APOE associated to the LVP allows the initial virus attachment to cell surface receptors such as the heparan sulfate proteoglycans (HSPGs), syndecan-1 (SDC1), syndecan-1 (SDC2), the low-density lipoprotein receptor (LDLR) and scavenger receptor class B type I (SCARB1). The cholesterol transfer activity of SCARB1 allows E2 exposure and binding of E2 to SCARB1 and the tetraspanin CD81. E1/E2 heterodimer binding on CD81 activates the epithelial growth factor receptor (EGFR) signaling pathway. Diffusion of the complex E1-E2-EGFR-SCARB1-CD81 to the cell lateral membrane allows further interaction with Claudin 1 (CLDN1) and occludin (OCLN) to finally trigger HCV entry. Inhibits host EIF2AK2/PKR activation, preventing the establishment of an antiviral state. Viral ligand for CD209/DC-SIGN and CLEC4M/DC-SIGNR, which are respectively found on dendritic cells (DCs), and on liver sinusoidal endothelial cells and macrophage-like cells of lymph node sinuses. These interactions allow the capture of circulating HCV particles by these cells and subsequent facilitated transmission to permissive cells such as hepatocytes and lymphocyte subpopulations. The sequence is that of Genome polyprotein from Hepatitis C virus (isolate HCT27) (HCV).